We begin with the raw amino-acid sequence, 726 residues long: Catalase-peroxidase (726 aa).

Positions 1–33 (MSTTDDTHNTLSTGKCPFHQGGHDRSAGAGTAS) are disordered. The tryptophyl-tyrosyl-methioninium (Trp-Tyr) (with M-252) cross-link spans 105-226 (WHGAGTYRSI…LGATEMGLIY (122 aa)). H106 functions as the Proton acceptor in the catalytic mechanism. Positions 226-252 (YVNPEGPDHSGEPLSAAAAIRATFGNM) form a cross-link, tryptophyl-tyrosyl-methioninium (Tyr-Met) (with W-105). Heme b is bound at residue H267.

This sequence belongs to the peroxidase family. Peroxidase/catalase subfamily. As to quaternary structure, homodimer or homotetramer. Heme b is required as a cofactor. Post-translationally, formation of the three residue Trp-Tyr-Met cross-link is important for the catalase, but not the peroxidase activity of the enzyme.

The enzyme catalyses H2O2 + AH2 = A + 2 H2O. The catalysed reaction is 2 H2O2 = O2 + 2 H2O. Bifunctional enzyme with both catalase and broad-spectrum peroxidase activity. The polypeptide is Catalase-peroxidase (Salmonella schwarzengrund (strain CVM19633)).